The following is a 92-amino-acid chain: Large ribosomal subunit protein eL43 (92 aa).

Residues 39–60 form a C4-type zinc finger; sequence CEFCGKFAVKRKAVGIWGCKDC.

Belongs to the eukaryotic ribosomal protein eL43 family.

This Pseudotsuga menziesii (Douglas-fir) protein is Large ribosomal subunit protein eL43 (RPL37A).